A 244-amino-acid polypeptide reads, in one-letter code: UPF0173 metal-dependent hydrolase Rcas_3617 (244 aa).

This sequence belongs to the UPF0173 family.

The chain is UPF0173 metal-dependent hydrolase Rcas_3617 from Roseiflexus castenholzii (strain DSM 13941 / HLO8).